We begin with the raw amino-acid sequence, 713 residues long: Undecaprenyl-diphosphooligosaccharide--protein glycotransferase (713 aa).

Residues 1–11 (MLKKEYLKNPY) are Cytoplasmic-facing. Residues 12-35 (LVLFAMIVLAYVFSVFCRFYWVWW) traverse the membrane as a helical segment. The Periplasmic segment spans residues 36–96 (ASEFNEYFFN…YWLYKITPFS (61 aa)). The DXD motif 1 motif lies at 52 to 54 (SND). Aspartate 54 serves as a coordination point for Mn(2+). Residues 97–122 (FESIILYMSTFLSSLVVIPIILLANE) traverse the membrane as a helical segment. Over 123–125 (YKR) the chain is Cytoplasmic. A helical transmembrane segment spans residues 126 to 144 (PLMGFVAALLASVANSYYN). The Periplasmic portion of the chain corresponds to 145–152 (RTMSGYYD). Residue aspartate 152 participates in Mn(2+) binding. A DXD motif 2 motif is present at residues 152–154 (DTD). Residues 153-174 (TDMLVIVLPMFILFFMVRMILK) form a helical membrane-spanning segment. Topologically, residues 175 to 176 (KD) are cytoplasmic. The helical transmembrane segment at 177-192 (FFSLIALPLFIGIYLW) threads the bilayer. The Periplasmic portion of the chain corresponds to 193 to 197 (WYPSS). Residue 194–196 (YPS) coordinates [alpha-D-GalNAc-(1-&gt;4)]2-[beta-D-Glc-(1-&gt;3)]-[alpha-D-GalNAc-(1-&gt;4)]2-alpha-D-GalNAc-(1-&gt;3)-alpha-D-diNAcBac-tri-trans,hepta-cis-undecaprenyl diphosphate. A helical membrane pass occupies residues 198–215 (YTLNVALIGLFLIYTLIF). Topologically, residues 216-220 (HRKEK) are cytoplasmic. The chain crosses the membrane as a helical span at residues 221–233 (IFYIAVILSSLTL). Residues 234-237 (SNIA) lie on the Periplasmic side of the membrane. Residues 238 to 254 (WFYQSAIIVILFALFAL) traverse the membrane as a helical segment. Over 255 to 260 (EQKRLN) the chain is Cytoplasmic. A helical membrane pass occupies residues 261–278 (FMIIGILGSATLIFLILS). Over 279 to 324 (GGVDPILYQLKFYIFRSDESANLTQGFMYFNVNQTIQEVENVDFSE) the chain is Periplasmic. A [alpha-D-GalNAc-(1-&gt;4)]2-[beta-D-Glc-(1-&gt;3)]-[alpha-D-GalNAc-(1-&gt;4)]2-alpha-D-GalNAc-(1-&gt;3)-alpha-D-diNAcBac-tri-trans,hepta-cis-undecaprenyl diphosphate-binding site is contributed by tyrosine 291. Positions 313-316 (TIQE) match the TIXE motif motif. Glutamate 316 provides a ligand contact to Mn(2+). A helical membrane pass occupies residues 325–347 (FMRRISGSEIVFLFSLFGFVWLL). Residues 348 to 352 (RKHKS) are Cytoplasmic-facing. A helical transmembrane segment spans residues 353-369 (MIMALPILVLGFLALKG). Topologically, residues 370 to 373 (GLRF) are periplasmic. Arginine 372 contacts [alpha-D-GalNAc-(1-&gt;4)]2-[beta-D-Glc-(1-&gt;3)]-[alpha-D-GalNAc-(1-&gt;4)]2-alpha-D-GalNAc-(1-&gt;3)-alpha-D-diNAcBac-tri-trans,hepta-cis-undecaprenyl diphosphate. A helical transmembrane segment spans residues 374 to 396 (TIYSVPVMALGFGFLLSEFKAIL). Residues 397–406 (VKKYSQLTSN) are Cytoplasmic-facing. The helical transmembrane segment at 407-427 (VCIVFATILTLAPVFIHIYNY) threads the bilayer. Topologically, residues 428 to 713 (KAPTVFSQNE…RDAKVFKLKI (286 aa)) are periplasmic. The segment at 457-459 (WWD) is interacts with target acceptor peptide in protein substrate. The short motif at 457-461 (WWDYG) is the WWDYG motif element. A [alpha-D-GalNAc-(1-&gt;4)]2-[beta-D-Glc-(1-&gt;3)]-[alpha-D-GalNAc-(1-&gt;4)]2-alpha-D-GalNAc-(1-&gt;3)-alpha-D-diNAcBac-tri-trans,hepta-cis-undecaprenyl diphosphate-binding site is contributed by tyrosine 462. Residue asparagine 534 is glycosylated (N-linked (DATDGlc) asparagine). The MI motif signature appears at 568-575 (MSLIFSTV).

It belongs to the STT3 family. It depends on Mg(2+) as a cofactor. Mn(2+) serves as cofactor.

It localises to the cell inner membrane. The enzyme catalyses tritrans,heptacis-undecaprenyl diphosphooligosaccharide + [protein]-L-asparagine = tritrans,heptacis-undecaprenyl diphosphate + a glycoprotein with the oligosaccharide chain attached by N-beta-D-glycosyl linkage to protein L-asparagine.. Its pathway is protein modification; protein glycosylation. Oligosaccharyl transferase (OST) that catalyzes the initial transfer of a defined glycan (GalNAc(2)GlcGalNAc(3)Bac(NAc)(2) in eubacteria, where Bac(NAc)(2) is di-N-acetyl bacillosamine) from the lipid carrier undecaprenol-pyrophosphate to an asparagine residue within an Asp/Glu-Asn-X-Ser/Thr consensus motif in nascent polypeptide chains, the first step in protein N-glycosylation. In Campylobacter jejuni subsp. jejuni serotype O:2 (strain ATCC 700819 / NCTC 11168), this protein is Undecaprenyl-diphosphooligosaccharide--protein glycotransferase (pglB).